The chain runs to 519 residues: MSDQVIIFDTTLRDGEQALSASLTVKEKLQIAFALERLGVDVMEVGFPISSPGDFESVKTIAREIKNSRVCGLSRALPKDIDAAWNALKGADAFRIHTFISTSTIHVENKLKRTFDAVLEMGINAVKHARNYTDDVEFSCEDAGRTPIDNLCRIVEEAIKAGATTINIPDTVGYTYPSEFGGIIKTLFNRVPNIDQAIISVHCHDDLGMSVANSITAVENGARQIECTMNGLGERAGNCSLEEVAMILQTRKDKLGFTTNVNPMEISRTSQLVSQLCNMPIQANKAIVGANAFSHSSGIHQDGVLKSQNTYEIMTPESVGISTNKLNLTSRSGRHVIQHRMQELGYRDTDYDLEQLYASFVELADKKGQVFDYDLEALMFFNKVDSDPQHYRLESINVQSGSGLVATATIVMSIGEDKKVVEAATGNGPIDAAYQCLMRISGLDINMDDYHINAKGAGKDALGQVDIVATYNGQKFHGLGLSTDIIESSTKAMVHVMNHIHLAKAVAIEKEQLIHIDQV.

The Pyruvate carboxyltransferase domain occupies 5-267; the sequence is VIIFDTTLRD…TTNVNPMEIS (263 aa). Positions 14, 202, 204, and 238 each coordinate Mn(2+). Positions 392-519 are regulatory domain; that stretch reads RLESINVQSG…KEQLIHIDQV (128 aa).

The protein belongs to the alpha-IPM synthase/homocitrate synthase family. LeuA type 1 subfamily. In terms of assembly, homodimer. The cofactor is Mn(2+).

It is found in the cytoplasm. The enzyme catalyses 3-methyl-2-oxobutanoate + acetyl-CoA + H2O = (2S)-2-isopropylmalate + CoA + H(+). The protein operates within amino-acid biosynthesis; L-leucine biosynthesis; L-leucine from 3-methyl-2-oxobutanoate: step 1/4. Its function is as follows. Catalyzes the condensation of the acetyl group of acetyl-CoA with 3-methyl-2-oxobutanoate (2-ketoisovalerate) to form 3-carboxy-3-hydroxy-4-methylpentanoate (2-isopropylmalate). The polypeptide is 2-isopropylmalate synthase (Psychromonas ingrahamii (strain DSM 17664 / CCUG 51855 / 37)).